Consider the following 92-residue polypeptide: Small ribosomal subunit protein uS19 (92 aa).

It belongs to the universal ribosomal protein uS19 family.

In terms of biological role, protein S19 forms a complex with S13 that binds strongly to the 16S ribosomal RNA. In Granulibacter bethesdensis (strain ATCC BAA-1260 / CGDNIH1), this protein is Small ribosomal subunit protein uS19.